The sequence spans 302 residues: Ribonuclease HII (302 aa).

Residues 53–297 (EFEIGVDEVG…VQQAIEGTLA (245 aa)) enclose the RNase H type-2 domain. A divalent metal cation is bound by residues aspartate 59, glutamate 60, and aspartate 163.

Belongs to the RNase HII family. Mn(2+) is required as a cofactor. The cofactor is Mg(2+).

The protein resides in the cytoplasm. It catalyses the reaction Endonucleolytic cleavage to 5'-phosphomonoester.. In terms of biological role, endonuclease that specifically degrades the RNA of RNA-DNA hybrids. The protein is Ribonuclease HII of Psychrobacter sp. (strain PRwf-1).